The chain runs to 65 residues: Toxin VmKTx1 (65 aa).

The first 21 residues, 1–21 (MKTSCLLTILLLSFLVAVAVA), serve as a signal peptide directing secretion. The propeptide occupies 22-28 (EGERSAR). 4 disulfide bridges follow: C34/C54, C40/C59, C44/C61, and C49/C64. C64 is modified (cysteine amide).

This sequence belongs to the short scorpion toxin superfamily. Potassium channel inhibitor family. Alpha-KTx 23 subfamily. Expressed by the venom gland.

The protein resides in the secreted. Functionally, voltage-gated potassium channel inhibitor. Selectively and reversibly binds (Kd=0.77 nM) and blocks hKv1.3/KCNA3 potassium channels of human T-lymphocytes. Also shows a very weak effect on hKv1.2/KCNA2 (Kd=7.1 uM). Also reduces the fraction of CD40L expressing T cells that are stimulated by alphaCD3/alphaCD28. This is Toxin VmKTx1 from Vaejovis mexicanus smithi (Mexican scorpion).